The sequence spans 946 residues: Translation initiation factor IF-2 (946 aa).

2 disordered regions span residues 58-250 (AERK…AVVI) and 301-324 (VSRD…KSLS). Composition is skewed to low complexity over residues 102–165 (EPPQ…QPAA) and 174–185 (AQPSAPQPAAAQ). The span at 186–211 (PRPPQPPMPSRPPPAGYRPAPPPGAR) shows a compositional bias: pro residues. The span at 212–229 (PPMSAAPGAPAQPGAAAQ) shows a compositional bias: low complexity. Positions 445-614 (IRPPVVTVMG…ALQSEVLELK (170 aa)) constitute a tr-type G domain. Positions 454-461 (GHVDHGKT) are G1. 454–461 (GHVDHGKT) is a binding site for GTP. Residues 479–483 (GITQH) form a G2 region. Residues 500-503 (DTPG) form a G3 region. Residues 500-504 (DTPGH) and 554-557 (NKVD) each bind GTP. Residues 554-557 (NKVD) form a G4 region. The G5 stretch occupies residues 590–592 (SAR).

It belongs to the TRAFAC class translation factor GTPase superfamily. Classic translation factor GTPase family. IF-2 subfamily.

The protein resides in the cytoplasm. In terms of biological role, one of the essential components for the initiation of protein synthesis. Protects formylmethionyl-tRNA from spontaneous hydrolysis and promotes its binding to the 30S ribosomal subunits. Also involved in the hydrolysis of GTP during the formation of the 70S ribosomal complex. This is Translation initiation factor IF-2 from Anaeromyxobacter sp. (strain K).